The sequence spans 174 residues: Early E1A protein (174 aa).

The interaction with RB1 in competition with E2F1 stretch occupies residues 40–48; that stretch reads PSLHDLFDL. Positions 106-110 match the LXCXE motif, interaction with host RB1 motif; the sequence is LLCLE. A zinc finger lies at 145 to 163; that stretch reads CLRCAYYQEQGENSICGLC.

The protein belongs to the adenoviridae E1A protein family. Interacts with host UBE2I; this interaction interferes with polySUMOylation. Interacts with host RB1; this interaction induces the aberrant dissociation of RB1-E2F1 complex thereby disrupting the activity of RB1 and activating E2F1-regulated genes. Interacts with host ATF7; the interaction enhances ATF7-mediated viral transactivation activity which requires the zinc binding domains of both proteins. Isoform early E1A 32 kDa protein and isoform early E1A 26 kDa protein interact (via N-terminus) with CUL1 and E3 ubiquitin ligase RBX1; these interactions inhibit RBX1-CUL1-dependent elongation reaction of ubiquitin chains and attenuate ubiquitination of SCF(FBXW7) target proteins. Interacts (via PXLXP motif) with host ZMYND11/BS69 (via MYND-type zinc finger); this interaction inhibits E1A mediated transactivation. Interacts with host EP300; this interaction stimulates the acetylation of RB1 by recruiting EP300 and RB1 into a multimeric-protein complex. Interacts with host CTBP1 and CTBP2; this interaction seems to potentiate viral replication. Interacts with host DCAF7. Interacts with host DYRK1A. Interacts with host KPNA4; this interaction allows E1A import into the host nucleus. Interacts with host EP400; this interaction stabilizes MYC. Interacts with host TBP protein; this interaction probably disrupts the TBP-TATA complex.

The protein localises to the host nucleus. In terms of biological role, plays a role in viral genome replication by driving entry of quiescent cells into the cell cycle. Stimulation of progression from G1 to S phase allows the virus to efficiently use the cellular DNA replicating machinery to achieve viral genome replication. E1A protein has both transforming and trans-activating activities. Induces the disassembly of the E2F1 transcription factor from RB1 by direct competition for the same binding site on RB1, with subsequent transcriptional activation of E2F1-regulated S-phase genes and of the E2 region of the adenoviral genome. Release of E2F1 leads to the ARF-mediated inhibition of MDM2 and causes TP53/p53 to accumulate because it is not targeted for degradation by MDM2-mediated ubiquitination anymore. This increase in TP53, in turn, would arrest the cell proliferation and direct its death but this effect is counteracted by the viral protein E1B-55K. Inactivation of the ability of RB1 to arrest the cell cycle is critical for cellular transformation, uncontrolled cellular growth and proliferation induced by viral infection. Interaction with RBX1 and CUL1 inhibits ubiquitination of the proteins targeted by SCF(FBXW7) ubiquitin ligase complex, and may be linked to unregulated host cell proliferation. The tumorigenesis-restraining activity of E1A may be related to the disruption of the host CtBP-CtIP complex through the CtBP binding motif. This chain is Early E1A protein, found in Canine adenovirus serotype 1 (strain RI261) (CAdV-1).